A 113-amino-acid polypeptide reads, in one-letter code: Putative pterin-4-alpha-carbinolamine dehydratase (113 aa).

Belongs to the pterin-4-alpha-carbinolamine dehydratase family.

The enzyme catalyses (4aS,6R)-4a-hydroxy-L-erythro-5,6,7,8-tetrahydrobiopterin = (6R)-L-erythro-6,7-dihydrobiopterin + H2O. This Chlorobium limicola (strain DSM 245 / NBRC 103803 / 6330) protein is Putative pterin-4-alpha-carbinolamine dehydratase.